The primary structure comprises 239 residues: MQLWVGLGNPGAKYAGNRHNIGWMAVDRVAEDHGFAPWRAKFQGEVSEGVLDGEKVLLLKPTTFMNLSGQSVGEAMRFYKLDSTDVTVWHDEIDLAPAKIRVKAGGGHAGHNGLRSIHQHIGPHYDRVRLGVGHPGHKDRVPGYVLSDFAKADAGWLDDVLRGVSDGAPHLARGDGGKFLNAVALRVAPPRSSTSKPKAQDNREDAAQAAEERSETRTPPEARPEDTRSALQKLADKFR.

Residue Tyr-14 coordinates tRNA. The active-site Proton acceptor is the His-19. Residues Phe-64, Asn-66, and Asn-112 each contribute to the tRNA site. The disordered stretch occupies residues 188–239 (APPRSSTSKPKAQDNREDAAQAAEERSETRTPPEARPEDTRSALQKLADKFR). The segment covering 198–239 (KAQDNREDAAQAAEERSETRTPPEARPEDTRSALQKLADKFR) has biased composition (basic and acidic residues).

It belongs to the PTH family. Monomer.

The protein resides in the cytoplasm. It carries out the reaction an N-acyl-L-alpha-aminoacyl-tRNA + H2O = an N-acyl-L-amino acid + a tRNA + H(+). Its function is as follows. Hydrolyzes ribosome-free peptidyl-tRNAs (with 1 or more amino acids incorporated), which drop off the ribosome during protein synthesis, or as a result of ribosome stalling. In terms of biological role, catalyzes the release of premature peptidyl moieties from peptidyl-tRNA molecules trapped in stalled 50S ribosomal subunits, and thus maintains levels of free tRNAs and 50S ribosomes. The polypeptide is Peptidyl-tRNA hydrolase (Jannaschia sp. (strain CCS1)).